A 214-amino-acid chain; its full sequence is Holliday junction branch migration complex subunit RuvA (214 aa).

Residues 1-67 are domain I; the sequence is MVGWLKGLIV…ADNWQFFGFK (67 aa). A domain II region spans residues 68–146; that stretch reads STQERDIFRE…AFAGMDPAPS (79 aa). The interval 147–154 is flexible linker; sequence LAEGVSSE. The interval 155 to 214 is domain III; the sequence is QMPESGADVEATLSMLGYDDLEVRRAIRAIAEGSDGPPPPGDDQDAWLRGCLQWLSRDSA.

The protein belongs to the RuvA family. In terms of assembly, homotetramer. Forms an RuvA(8)-RuvB(12)-Holliday junction (HJ) complex. HJ DNA is sandwiched between 2 RuvA tetramers; dsDNA enters through RuvA and exits via RuvB. An RuvB hexamer assembles on each DNA strand where it exits the tetramer. Each RuvB hexamer is contacted by two RuvA subunits (via domain III) on 2 adjacent RuvB subunits; this complex drives branch migration. In the full resolvosome a probable DNA-RuvA(4)-RuvB(12)-RuvC(2) complex forms which resolves the HJ.

The protein localises to the cytoplasm. Its function is as follows. The RuvA-RuvB-RuvC complex processes Holliday junction (HJ) DNA during genetic recombination and DNA repair, while the RuvA-RuvB complex plays an important role in the rescue of blocked DNA replication forks via replication fork reversal (RFR). RuvA specifically binds to HJ cruciform DNA, conferring on it an open structure. The RuvB hexamer acts as an ATP-dependent pump, pulling dsDNA into and through the RuvAB complex. HJ branch migration allows RuvC to scan DNA until it finds its consensus sequence, where it cleaves and resolves the cruciform DNA. This is Holliday junction branch migration complex subunit RuvA from Synechococcus sp. (strain CC9605).